We begin with the raw amino-acid sequence, 434 residues long: Glutamate-1-semialdehyde 2,1-aminomutase (434 aa).

The residue at position 266 (Lys266) is an N6-(pyridoxal phosphate)lysine.

The protein belongs to the class-III pyridoxal-phosphate-dependent aminotransferase family. HemL subfamily. In terms of assembly, homodimer. It depends on pyridoxal 5'-phosphate as a cofactor.

Its subcellular location is the cytoplasm. It catalyses the reaction (S)-4-amino-5-oxopentanoate = 5-aminolevulinate. Its pathway is porphyrin-containing compound metabolism; protoporphyrin-IX biosynthesis; 5-aminolevulinate from L-glutamyl-tRNA(Glu): step 2/2. In Fusobacterium nucleatum subsp. nucleatum (strain ATCC 25586 / DSM 15643 / BCRC 10681 / CIP 101130 / JCM 8532 / KCTC 2640 / LMG 13131 / VPI 4355), this protein is Glutamate-1-semialdehyde 2,1-aminomutase.